The primary structure comprises 691 residues: Probable serine/threonine-protein kinase pXi (691 aa).

The region spanning 18–263 is the Protein kinase domain; it reads YEIGSQIGNG…IDQTLKHPWI (246 aa). Residues 24–32 and Lys47 each bind ATP; that span reads IGNGKFAQV. The active-site Proton acceptor is Asp137. Disordered regions lie at residues 314 to 350, 420 to 447, 510 to 536, and 600 to 620; these read TPIK…ENEN, ENDS…KFTS, QHNN…GNGT, and GGSG…KKDK. Low complexity predominate over residues 322 to 336; it reads NNNNNNNNNNNNNNN. Residues 338 to 350 are compositionally biased toward basic and acidic residues; sequence ILDKKSNENENEN. 3 stretches are compositionally biased toward low complexity: residues 423–433, 512–536, and 600–615; these read SSSSETYSSSS, NNNI…GNGT, and GGSG…TGGS. Positions 642–691 form a coiled coil; sequence PKETMDKLASVLSNYKQKNQEKSLKVKYEKQKDKYKKLKSQLKKDKSLLK.

Belongs to the protein kinase superfamily. CAMK Ser/Thr protein kinase family.

The catalysed reaction is L-seryl-[protein] + ATP = O-phospho-L-seryl-[protein] + ADP + H(+). It catalyses the reaction L-threonyl-[protein] + ATP = O-phospho-L-threonyl-[protein] + ADP + H(+). This Dictyostelium discoideum (Social amoeba) protein is Probable serine/threonine-protein kinase pXi (pXi).